Consider the following 478-residue polypeptide: Probable serine carboxypeptidase CPVL (478 aa).

An N-terminal signal peptide occupies residues 1–22 (MVRAKWKMVVSLILFMVSPGDG). Asn83 and Asn134 each carry an N-linked (GlcNAc...) asparagine glycan. Ser206 is an active-site residue. Residues Asn309 and Asn350 are each glycosylated (N-linked (GlcNAc...) asparagine). Catalysis depends on residues Asp390 and His450.

Belongs to the peptidase S10 family.

May be involved in the digestion of phagocytosed particles in the lysosome, participation in an inflammatory protease cascade, and trimming of peptides for antigen presentation. The polypeptide is Probable serine carboxypeptidase CPVL (Cpvl) (Mus musculus (Mouse)).